Reading from the N-terminus, the 201-residue chain is Protein tirC (201 aa).

In terms of domain architecture, TIR spans 52–186 (ERIKVFIVHG…YVWINYTEDL (135 aa)).

The protein is Protein tirC (tirC) of Dictyostelium discoideum (Social amoeba).